The sequence spans 362 residues: D-alanine--D-alanine ligase (362 aa).

In terms of domain architecture, ATP-grasp spans 134 to 345; it reads KILAQRAGVP…YPDLITRLIR (212 aa). 170–225 lines the ATP pocket; it reads GQLGTSNLFVKPSNQGSSVGITHVTDDSNYAEALAEAFKYDDKVLVEEGIVGTEVE. 3 residues coordinate Mg(2+): D298, E312, and N314.

This sequence belongs to the D-alanine--D-alanine ligase family. Mg(2+) serves as cofactor. The cofactor is Mn(2+).

The protein resides in the cytoplasm. It carries out the reaction 2 D-alanine + ATP = D-alanyl-D-alanine + ADP + phosphate + H(+). It participates in cell wall biogenesis; peptidoglycan biosynthesis. Cell wall formation. This is D-alanine--D-alanine ligase from Lactobacillus delbrueckii subsp. bulgaricus (strain ATCC 11842 / DSM 20081 / BCRC 10696 / JCM 1002 / NBRC 13953 / NCIMB 11778 / NCTC 12712 / WDCM 00102 / Lb 14).